The primary structure comprises 191 residues: dTTP/UTP pyrophosphatase (191 aa).

The active-site Proton acceptor is aspartate 70.

It belongs to the Maf family. YhdE subfamily. A divalent metal cation serves as cofactor.

It localises to the cytoplasm. It carries out the reaction dTTP + H2O = dTMP + diphosphate + H(+). The enzyme catalyses UTP + H2O = UMP + diphosphate + H(+). Its function is as follows. Nucleoside triphosphate pyrophosphatase that hydrolyzes dTTP and UTP. May have a dual role in cell division arrest and in preventing the incorporation of modified nucleotides into cellular nucleic acids. The protein is dTTP/UTP pyrophosphatase of Clostridium novyi (strain NT).